A 210-amino-acid polypeptide reads, in one-letter code: Orotate phosphoribosyltransferase (210 aa).

Residues arginine 94, lysine 98, histidine 100, and 120–128 (EDLISTGGS) each bind 5-phospho-alpha-D-ribose 1-diphosphate. Serine 124 contacts orotate.

This sequence belongs to the purine/pyrimidine phosphoribosyltransferase family. PyrE subfamily. As to quaternary structure, homodimer. The cofactor is Mg(2+).

It catalyses the reaction orotidine 5'-phosphate + diphosphate = orotate + 5-phospho-alpha-D-ribose 1-diphosphate. It participates in pyrimidine metabolism; UMP biosynthesis via de novo pathway; UMP from orotate: step 1/2. Its function is as follows. Catalyzes the transfer of a ribosyl phosphate group from 5-phosphoribose 1-diphosphate to orotate, leading to the formation of orotidine monophosphate (OMP). This Bacillus anthracis (strain A0248) protein is Orotate phosphoribosyltransferase.